We begin with the raw amino-acid sequence, 303 residues long: Proteasome subunit beta (303 aa).

Positions 1–67 are cleaved as a propeptide — removed in mature form; by autocatalysis; it reads MTWQFPDRLS…SGGTGQLPHG (67 aa). Threonine 68 acts as the Nucleophile in catalysis.

Belongs to the peptidase T1B family. As to quaternary structure, the 20S proteasome core is composed of 14 alpha and 14 beta subunits that assemble into four stacked heptameric rings, resulting in a barrel-shaped structure. The two inner rings, each composed of seven catalytic beta subunits, are sandwiched by two outer rings, each composed of seven alpha subunits. The catalytic chamber with the active sites is on the inside of the barrel. Has a gated structure, the ends of the cylinder being occluded by the N-termini of the alpha-subunits. Is capped by the proteasome-associated ATPase, ARC.

It is found in the cytoplasm. The catalysed reaction is Cleavage of peptide bonds with very broad specificity.. It functions in the pathway protein degradation; proteasomal Pup-dependent pathway. The formation of the proteasomal ATPase ARC-20S proteasome complex, likely via the docking of the C-termini of ARC into the intersubunit pockets in the alpha-rings, may trigger opening of the gate for substrate entry. Interconversion between the open-gate and close-gate conformations leads to a dynamic regulation of the 20S proteasome proteolysis activity. In terms of biological role, component of the proteasome core, a large protease complex with broad specificity involved in protein degradation. This is Proteasome subunit beta from Mycobacterium avium (strain 104).